Reading from the N-terminus, the 134-residue chain is Putative oxidoreductase CatD (134 aa).

4 helical membrane passes run 5–25 (FEIG…VHGL), 46–66 (FMAY…FFGL), 70–90 (IVGV…KLKA), and 91–111 (PFMG…HLAL).

It belongs to the DoxX family.

The protein resides in the cell membrane. In terms of biological role, essential for growth and viability in the presence of catechol and probably involved in the detoxification of catechol. This is Putative oxidoreductase CatD (catD) from Bacillus subtilis (strain 168).